The following is a 235-amino-acid chain: Uridylate kinase (235 aa).

9–12 (KLSG) contributes to the ATP binding site. The interval 17-22 (GKDGYG) is involved in allosteric activation by GTP. A UMP-binding site is contributed by Gly51. Gly52 and Arg56 together coordinate ATP. Residues Asp71 and 132–139 (TGNPYFTT) each bind UMP. Positions 159, 165, and 168 each coordinate ATP.

It belongs to the UMP kinase family. Homohexamer.

Its subcellular location is the cytoplasm. It catalyses the reaction UMP + ATP = UDP + ADP. Its pathway is pyrimidine metabolism; CTP biosynthesis via de novo pathway; UDP from UMP (UMPK route): step 1/1. Allosterically activated by GTP. Inhibited by UTP. Catalyzes the reversible phosphorylation of UMP to UDP. The sequence is that of Uridylate kinase from Chlorobium luteolum (strain DSM 273 / BCRC 81028 / 2530) (Pelodictyon luteolum).